Consider the following 1141-residue polypeptide: DNA-directed RNA polymerase subunit beta (1141 aa).

The protein belongs to the RNA polymerase beta chain family. In terms of assembly, the RNAP catalytic core consists of 2 alpha, 1 beta, 1 beta' and 1 omega subunit. When a sigma factor is associated with the core the holoenzyme is formed, which can initiate transcription.

The enzyme catalyses RNA(n) + a ribonucleoside 5'-triphosphate = RNA(n+1) + diphosphate. Functionally, DNA-dependent RNA polymerase catalyzes the transcription of DNA into RNA using the four ribonucleoside triphosphates as substrates. This Parafrankia sp. (strain EAN1pec) protein is DNA-directed RNA polymerase subunit beta.